A 275-amino-acid chain; its full sequence is HUWE1-associated protein modifying stress responses 1 (275 aa).

A compositionally biased stretch (acidic residues) spans 32–44 (AEQDEQLPPELQE). A disordered region spans residues 32 to 51 (AEQDEQLPPELQEEAAAAAQ). The HUWE1-binding and HAPSTR1 oligomerization (HBO) domain stretch occupies residues 80–152 (QQPGLSLWVP…LISFLCGKVP (73 aa)). Disordered regions lie at residues 155 to 181 (RNSRAPPRLTVVSPNRATSTETSSSVE), 204 to 227 (SVRSSTPGSPTHVSSGSNASRRRN), and 250 to 275 (GTRKRTSAQCGDVITDSPTHKRNRMI). Ser167 bears the Phosphoserine mark. The segment covering 172 to 181 (TSTETSSSVE) has biased composition (low complexity). Residues 204–216 (SVRSSTPGSPTHV) are compositionally biased toward polar residues. At Ser212 the chain carries Phosphoserine.

Belongs to the HAPSTR1 family. In terms of assembly, homooligomer. Heterooligomer with HAPSTR2; the interaction is direct and stabilizes HAPSTR1. Interacts with HUWE1. In terms of processing, ubiquitinated by HUWE1. Promotes HAPSTR1 degradation through polyubiquitination.

The protein localises to the nucleus. It is found in the cytoplasm. Functionally, acts as a central player within a network of stress response pathways promoting cellular adaptability. The E3 ligase HUWE1 assists HAPSTR1 in controlling stress signaling and in turn, HUWE1 feeds back to promote the degradation of HAPSTR1. HAPSTR1 represents a central coordination mechanism for stress response programs. Functions as a negative regulator of TP53/P53 in the cellular response to telomere erosion and probably also DNA damage. May attenuate p53/TP53 activation through the E3 ubiquitin ligase HUWE1. This Homo sapiens (Human) protein is HUWE1-associated protein modifying stress responses 1.